Reading from the N-terminus, the 484-residue chain is Cobyric acid synthase (484 aa).

A GATase cobBQ-type domain is found at 251–438 (ALKIAVPVLP…LHGLFGSDAY (188 aa)). C333 serves as the catalytic Nucleophile. H430 is a catalytic residue.

This sequence belongs to the CobB/CobQ family. CobQ subfamily.

It functions in the pathway cofactor biosynthesis; adenosylcobalamin biosynthesis. Functionally, catalyzes amidations at positions B, D, E, and G on adenosylcobyrinic A,C-diamide. NH(2) groups are provided by glutamine, and one molecule of ATP is hydrogenolyzed for each amidation. This is Cobyric acid synthase from Rhizobium leguminosarum bv. trifolii (strain WSM2304).